The following is a 208-amino-acid chain: Uracil phosphoribosyltransferase (208 aa).

5-phospho-alpha-D-ribose 1-diphosphate is bound by residues arginine 78, arginine 103, and 130–138 (DPMLATGGS). Uracil is bound by residues isoleucine 193 and 198 to 200 (GDA). Position 199 (aspartate 199) interacts with 5-phospho-alpha-D-ribose 1-diphosphate.

The protein belongs to the UPRTase family. Mg(2+) serves as cofactor.

The catalysed reaction is UMP + diphosphate = 5-phospho-alpha-D-ribose 1-diphosphate + uracil. The protein operates within pyrimidine metabolism; UMP biosynthesis via salvage pathway; UMP from uracil: step 1/1. With respect to regulation, allosterically activated by GTP. Functionally, catalyzes the conversion of uracil and 5-phospho-alpha-D-ribose 1-diphosphate (PRPP) to UMP and diphosphate. The protein is Uracil phosphoribosyltransferase of Shewanella halifaxensis (strain HAW-EB4).